A 356-amino-acid polypeptide reads, in one-letter code: MQPSTLQALAKRALATQHVSKDDYYILERCGLWWHEAPISIYIDNDNQIMIRTLCFKEGIKLNTALVLAVKENNEDLIMLFTEWGANINYGLLFINNEHTRNLCRKLGAKEELETSEILRFFFETKCKITSSNVILCHELFSNNPFLQNVNMVDLRMIIYWELKDLTTNSMLNEISFSEMLTKYWYGIAVKYNLKEAIQYFCQEYRHFDEWRLICALSFNNVFDLHEICNTTKVHMSINKMMELACMRDNNFLTIYYCFALGANANRAMLISVKNFCIENMFFCMDLGANVIEHSKTLADIYGYSIIVNILSLKIYKANPILLSKETNPEKINTLLKNYYSKNMLAYDIYCIDNYL.

One copy of the ANK repeat lies at 61-93 (KLNTALVLAVKENNEDLIMLFTEWGANINYGLL).

This sequence belongs to the asfivirus MGF 360 family.

Plays a role in virus cell tropism, and may be required for efficient virus replication in macrophages. The sequence is that of Protein MGF 360-3L from African swine fever virus (isolate Warthog/Namibia/Wart80/1980) (ASFV).